We begin with the raw amino-acid sequence, 383 residues long: Lipid-A-disaccharide synthase (383 aa).

The protein belongs to the LpxB family.

The enzyme catalyses 2-N,3-O-bis[(3R)-3-hydroxytetradecanoyl]-alpha-D-glucosaminyl 1-phosphate + UDP-2-N,3-O-bis[(3R)-3-hydroxytetradecanoyl]-alpha-D-glucosamine = lipid A disaccharide (E. coli) + UDP + H(+). The catalysed reaction is a lipid X + a UDP-2-N,3-O-bis[(3R)-3-hydroxyacyl]-alpha-D-glucosamine = a lipid A disaccharide + UDP + H(+). It functions in the pathway glycolipid biosynthesis; lipid IV(A) biosynthesis; lipid IV(A) from (3R)-3-hydroxytetradecanoyl-[acyl-carrier-protein] and UDP-N-acetyl-alpha-D-glucosamine: step 5/6. Its function is as follows. Condensation of UDP-2,3-diacylglucosamine and 2,3-diacylglucosamine-1-phosphate to form lipid A disaccharide, a precursor of lipid A, a phosphorylated glycolipid that anchors the lipopolysaccharide to the outer membrane of the cell. This Pectobacterium carotovorum subsp. carotovorum (strain PC1) protein is Lipid-A-disaccharide synthase.